We begin with the raw amino-acid sequence, 447 residues long: Cobyrinate a,c-diamide synthase (447 aa).

The region spanning 252 to 439 (KIAIAFDESF…AHQHAVGNPY (188 aa)) is the GATase cobBQ-type domain. Cys331 serves as the catalytic Nucleophile.

It belongs to the CobB/CbiA family. Mg(2+) is required as a cofactor.

It carries out the reaction cob(II)yrinate + 2 L-glutamine + 2 ATP + 2 H2O = cob(II)yrinate a,c diamide + 2 L-glutamate + 2 ADP + 2 phosphate + 2 H(+). The enzyme catalyses Ni-sirohydrochlorin + 2 L-glutamine + 2 ATP + 2 H2O = Ni-sirohydrochlorin a,c-diamide + 2 L-glutamate + 2 ADP + 2 phosphate + 2 H(+). It functions in the pathway cofactor biosynthesis; adenosylcobalamin biosynthesis; cob(II)yrinate a,c-diamide from sirohydrochlorin (anaerobic route): step 10/10. Its function is as follows. Catalyzes the ATP-dependent amidation of the two carboxylate groups at positions a and c of cobyrinate, using either L-glutamine or ammonia as the nitrogen source. Involved in the biosynthesis of the unique nickel-containing tetrapyrrole coenzyme F430, the prosthetic group of methyl-coenzyme M reductase (MCR), which plays a key role in methanogenesis and anaerobic methane oxidation. Catalyzes the ATP-dependent amidation of the two carboxylate groups at positions a and c of Ni-sirohydrochlorin, using L-glutamine or ammonia as the nitrogen source. In Methanococcus vannielii (strain ATCC 35089 / DSM 1224 / JCM 13029 / OCM 148 / SB), this protein is Cobyrinate a,c-diamide synthase.